The primary structure comprises 319 residues: Chromoplast-specific carotenoid-associated protein C1, chromoplastic (319 aa).

The N-terminal 55 residues, 1-55, are a transit peptide targeting the chromoplast; the sequence is MTSIAFWNAFTVNPFPAAARRSPPPLTPFTSGALSPARKPRILEISHPRTLPSFR.

The protein belongs to the PAP/fibrillin family. Expressed in flower buds and floral lip tissues. Not detected in roots and leaves. Specifically expressed in conical papillate cells of adaxial epidermis of lip tissues.

The protein localises to the plastid. It localises to the chromoplast. Its function is as follows. May be involved in carotenoid sequestration within chromoplasts. This Oncidium hybrid cultivar (Orchid) protein is Chromoplast-specific carotenoid-associated protein C1, chromoplastic (CHRC1).